The sequence spans 1441 residues: ABC transporter G family member 41 (1441 aa).

The segment covering 1–14 has biased composition (basic and acidic residues); that stretch reads MEDKKQQQQQQREE. The tract at residues 1–28 is disordered; it reads MEDKKQQQQQQREEAEAEEEAPVVPSSL. The region spanning 159 to 432 is the ABC transporter 1 domain; the sequence is ATARGLSRRP…FESCGFKCPE (274 aa). An ATP-binding site is contributed by 192–199; that stretch reads GPPGCGKT. The ABC transmembrane type-2 1 domain occupies 510-722; the sequence is DLLKACFARE…AEIGLTGNEF (213 aa). The next 6 membrane-spanning stretches (helical) occupy residues 528-548, 566-586, 600-620, 642-662, 672-692, and 758-778; these read FIYI…GTVF, SLFY…AIAV, FYPA…LSLV, FFCQ…LFRC, ASSV…GFII, and ASAL…GLTI. In terms of domain architecture, ABC transporter 2 spans 838–1090; it reads ISFQDVNYYV…NVIHYFETIP (253 aa). 883–890 contacts ATP; the sequence is GVTGAGKT. The ABC transmembrane type-2 2 domain maps to 1163–1379; that stretch reads EQLKACIWKQ…TLNVFFTTQF (217 aa). Transmembrane regions (helical) follow at residues 1187 to 1207, 1215 to 1235, 1272 to 1292, 1300 to 1320, 1329 to 1349, 1357 to 1377, and 1413 to 1433; these read ILFI…QGDI, GLFT…INNC, IPYV…MIGY, FWFM…GMMI, VASI…GFIV, WWIW…FFTT, and LAAI…GLSI.

It belongs to the ABC transporter superfamily. ABCG family. PDR (TC 3.A.1.205) subfamily.

It is found in the membrane. In terms of biological role, may be a general defense protein. The protein is ABC transporter G family member 41 of Oryza sativa subsp. japonica (Rice).